The sequence spans 446 residues: Argininosuccinate lyase (446 aa).

It belongs to the lyase 1 family. Argininosuccinate lyase subfamily.

It localises to the cytoplasm. It catalyses the reaction 2-(N(omega)-L-arginino)succinate = fumarate + L-arginine. It functions in the pathway amino-acid biosynthesis; L-arginine biosynthesis; L-arginine from L-ornithine and carbamoyl phosphate: step 3/3. The polypeptide is Argininosuccinate lyase (Bacteroides thetaiotaomicron (strain ATCC 29148 / DSM 2079 / JCM 5827 / CCUG 10774 / NCTC 10582 / VPI-5482 / E50)).